Here is a 201-residue protein sequence, read N- to C-terminus: Holliday junction branch migration complex subunit RuvA (201 aa).

The domain I stretch occupies residues 1-65 (MIAYIEGRVA…EDALELYGFS (65 aa)). Residues 66-143 (GWDERQTFLV…KVESLPASAG (78 aa)) form a domain II region. The segment at 143–147 (GLAAG) is flexible linker. The tract at residues 148-201 (VPGSVLRDAVQALGNLGYAEEEAAPVLKNILKQDPDLDVSEALRAALKALAKAR) is domain III.

Belongs to the RuvA family. Homotetramer. Forms an RuvA(8)-RuvB(12)-Holliday junction (HJ) complex. HJ DNA is sandwiched between 2 RuvA tetramers; dsDNA enters through RuvA and exits via RuvB. An RuvB hexamer assembles on each DNA strand where it exits the tetramer. Each RuvB hexamer is contacted by two RuvA subunits (via domain III) on 2 adjacent RuvB subunits; this complex drives branch migration. In the full resolvosome a probable DNA-RuvA(4)-RuvB(12)-RuvC(2) complex forms which resolves the HJ.

It is found in the cytoplasm. Functionally, the RuvA-RuvB-RuvC complex processes Holliday junction (HJ) DNA during genetic recombination and DNA repair, while the RuvA-RuvB complex plays an important role in the rescue of blocked DNA replication forks via replication fork reversal (RFR). RuvA specifically binds to HJ cruciform DNA, conferring on it an open structure. The RuvB hexamer acts as an ATP-dependent pump, pulling dsDNA into and through the RuvAB complex. HJ branch migration allows RuvC to scan DNA until it finds its consensus sequence, where it cleaves and resolves the cruciform DNA. This Oleidesulfovibrio alaskensis (strain ATCC BAA-1058 / DSM 17464 / G20) (Desulfovibrio alaskensis) protein is Holliday junction branch migration complex subunit RuvA.